The sequence spans 443 residues: DILAAFRVTPQPGVPPEEAGAAVAAESSTGTWTTVWTDGLTSLDRYKGRCYHIEPVPGDPDQYICYVAYPLDLFEEGSXTNMFTSIVGNVFGFKALRVLRLEDLRIPVAYTKTFQGPPHGIQVERDKLNKYGRPLMGCTIKPKLGLSAKNYGRAVYECLRGGLDFTKDDENVNSQPFMRWRDRFLFCAEAIYKAQAETGEIKGHYLNATAGTCEEMMKRAIFARELGVPIVMHDYLTGGFTANTTLAHYCRDNGLLLHIHRAMHAVIDRQKNHGMHFRVLAKALRMSGGDHIHAGTVVGKLEGERDITLGFVDLLRDDYIEKDRSRGIYFTQDWVSLPGVIPVASGGIHVWHMPALTEIFGDDSVLQFGGGTLGHPWGNAPGAVANRVALEACVKARNEGRDLAAEGNVIIREACKWSPELSAACEVWKEIKFEFEAMDTLDK.

Residues Asn-89 and Thr-139 each coordinate substrate. Lys-141 (proton acceptor) is an active-site residue. Lys-143 is a binding site for substrate. Residues Lys-167, Asp-169, and Glu-170 each coordinate Mg(2+). Lys-167 bears the N6-carboxylysine mark. His-260 acts as the Proton acceptor in catalysis. Residues Arg-261, His-293, and Ser-345 each coordinate substrate.

Belongs to the RuBisCO large chain family. Type I subfamily. Heterohexadecamer of 8 large chains and 8 small chains; disulfide-linked. The disulfide link is formed within the large subunit homodimers. Requires Mg(2+) as cofactor. Post-translationally, the disulfide bond which can form in the large chain dimeric partners within the hexadecamer appears to be associated with oxidative stress and protein turnover.

It localises to the plastid. The protein resides in the chloroplast. The catalysed reaction is 2 (2R)-3-phosphoglycerate + 2 H(+) = D-ribulose 1,5-bisphosphate + CO2 + H2O. It carries out the reaction D-ribulose 1,5-bisphosphate + O2 = 2-phosphoglycolate + (2R)-3-phosphoglycerate + 2 H(+). RuBisCO catalyzes two reactions: the carboxylation of D-ribulose 1,5-bisphosphate, the primary event in carbon dioxide fixation, as well as the oxidative fragmentation of the pentose substrate in the photorespiration process. Both reactions occur simultaneously and in competition at the same active site. The sequence is that of Ribulose bisphosphate carboxylase large chain from Verbena bonariensis (Argentinian vervain).